A 20-amino-acid polypeptide reads, in one-letter code: Apidaecin 2+ (20 aa).

A compositionally biased stretch (pro residues) spans 1 to 13 (GKPNKPRPAPIKP). The interval 1–20 (GKPNKPRPAPIKPRPPHPRL) is disordered.

It localises to the secreted. Antimicrobial peptide active against many Gram-negative enterobacterial and plant-associated bacterial species. Not active against other bacterial species like H.pylori, P.mirabilis, B.pertussis or N.gonorrhoeae. In Pimpla disparis (Parasitic wasp), this protein is Apidaecin 2+.